A 77-amino-acid chain; its full sequence is uncharacterized protein (77 aa).

The helical transmembrane segment at 49–71 (LVIASLILAIILLGILYYISYQM) threads the bilayer.

The protein resides in the membrane. This is an uncharacterized protein from Archaeoglobus fulgidus (strain ATCC 49558 / DSM 4304 / JCM 9628 / NBRC 100126 / VC-16).